Here is a 338-residue protein sequence, read N- to C-terminus: Mitochondrial E3 ubiquitin protein ligase 1 (338 aa).

The Cytoplasmic portion of the chain corresponds to 1-3 (MEF). A helical membrane pass occupies residues 4-24 (LHESVALGVDLLILGLCAREY). Residues 25–227 (VHYKRTAKVL…LIKRFEDAKT (203 aa)) lie on the Mitochondrial intermembrane side of the membrane. A helical membrane pass occupies residues 228 to 248 (TTILKLVVCSTISAILVAFIA). Topologically, residues 249 to 338 (KKLYRKRKQE…IVSKAAAFIA (90 aa)) are cytoplasmic. An RING-type zinc finger spans residues 290 to 326 (CVVCSTNPKEIILLPCGHVCLCEDCAQKISVTCPVCR).

Interacts with Marf. Post-translationally, auto-ubiquitinated.

The protein resides in the mitochondrion outer membrane. The enzyme catalyses S-ubiquitinyl-[E2 ubiquitin-conjugating enzyme]-L-cysteine + [acceptor protein]-L-lysine = [E2 ubiquitin-conjugating enzyme]-L-cysteine + N(6)-ubiquitinyl-[acceptor protein]-L-lysine.. Its function is as follows. Exhibits weak E3 ubiquitin-protein ligase activity. E3 ubiquitin ligases accept ubiquitin from an E2 ubiquitin-conjugating enzyme in the form of a thioester and then directly transfer the ubiquitin to targeted substrates. Plays a role in the control of mitochondrial morphology by promoting mitochondrial fission. Negatively regulates the mitochondrial fusion protein marf by promoting its ubiquitination, acting in a pathway that is parallel to the park/pink1 regulatory pathway. The chain is Mitochondrial E3 ubiquitin protein ligase 1 from Drosophila melanogaster (Fruit fly).